Consider the following 67-residue polypeptide: DNA-directed RNA polymerase subunit omega (67 aa).

This sequence belongs to the RNA polymerase subunit omega family. The RNAP catalytic core consists of 2 alpha, 1 beta, 1 beta' and 1 omega subunit. When a sigma factor is associated with the core the holoenzyme is formed, which can initiate transcription.

The catalysed reaction is RNA(n) + a ribonucleoside 5'-triphosphate = RNA(n+1) + diphosphate. Its function is as follows. Promotes RNA polymerase assembly. Latches the N- and C-terminal regions of the beta' subunit thereby facilitating its interaction with the beta and alpha subunits. The protein is DNA-directed RNA polymerase subunit omega of Nautilia profundicola (strain ATCC BAA-1463 / DSM 18972 / AmH).